Here is a 250-residue protein sequence, read N- to C-terminus: tRNA pseudouridine synthase A (250 aa).

Asp-52 serves as the catalytic Nucleophile. Tyr-110 provides a ligand contact to substrate.

This sequence belongs to the tRNA pseudouridine synthase TruA family. Homodimer.

The catalysed reaction is uridine(38/39/40) in tRNA = pseudouridine(38/39/40) in tRNA. Functionally, formation of pseudouridine at positions 38, 39 and 40 in the anticodon stem and loop of transfer RNAs. The sequence is that of tRNA pseudouridine synthase A from Citrifermentans bemidjiense (strain ATCC BAA-1014 / DSM 16622 / JCM 12645 / Bem) (Geobacter bemidjiensis).